We begin with the raw amino-acid sequence, 463 residues long: ATP-dependent protease ATPase subunit HslU (463 aa).

ATP-binding positions include V21, 63 to 68 (GVGKTE), D276, E341, and R413.

The protein belongs to the ClpX chaperone family. HslU subfamily. As to quaternary structure, a double ring-shaped homohexamer of HslV is capped on each side by a ring-shaped HslU homohexamer. The assembly of the HslU/HslV complex is dependent on binding of ATP.

The protein resides in the cytoplasm. In terms of biological role, ATPase subunit of a proteasome-like degradation complex; this subunit has chaperone activity. The binding of ATP and its subsequent hydrolysis by HslU are essential for unfolding of protein substrates subsequently hydrolyzed by HslV. HslU recognizes the N-terminal part of its protein substrates and unfolds these before they are guided to HslV for hydrolysis. This Thermotoga sp. (strain RQ2) protein is ATP-dependent protease ATPase subunit HslU.